The chain runs to 395 residues: Octopamine receptor beta-2R (395 aa).

Residues 1–42 (MDPINGSHSGANATISDITNGAYNATDAGEWTSSVMFKLRTC) are Extracellular-facing. N-linked (GlcNAc...) asparagine glycosylation is found at Asn-5, Asn-12, and Asn-24. A helical membrane pass occupies residues 43 to 63 (VLLLIVIMAVLGNMLVIVSVM). The Cytoplasmic segment spans residues 64-74 (RHRKLRVITNY). The chain crosses the membrane as a helical span at residues 75–95 (FVVSLAFADILVAMVVMPFNF). The Extracellular portion of the chain corresponds to 96–117 (SVQFNQGWVFGETICDLWNSSD). Asn-114 carries N-linked (GlcNAc...) asparagine glycosylation. Residues 118 to 140 (VYFTSTSILHLCCISVDRYYAIV) form a helical membrane-spanning segment. Residues 141–154 (KPLKYPIKMTKKMA) lie on the Cytoplasmic side of the membrane. A helical membrane pass occupies residues 155–175 (FVMLAATWLSPITISYVPIFM). At 176–202 (GWYTTTDFLESRRDDQCEFKVNKPYAV) the chain is on the extracellular side. A helical transmembrane segment spans residues 203 to 223 (ISSSISFWIPCTIMIFTYLAI). Over 224–282 (FKEANRQEKALHARAGNAMLMHRHSREVSDKNGALHINATTPTKDRNLLKMKREHKAAR) the chain is Cytoplasmic. Residues 283 to 303 (TLGIIMGAFILCWLPFFLYYV) traverse the membrane as a helical segment. The Extracellular segment spans residues 304–315 (STSLCDSCNCPE). Residues 316–336 (VVTVIMFWTGYFNSALNPIIY) traverse the membrane as a helical segment. Topologically, residues 337–395 (AYFNRDFRNAFKNTLACAFCSFCKRSASDLDAMERLDRRGSAQLRVPIPSRRASDLASL) are cytoplasmic.

Belongs to the G-protein coupled receptor 1 family.

The protein resides in the cell membrane. Its function is as follows. Autoreceptor for octopamine, which is a neurotransmitter, neurohormone, and neuromodulator in invertebrates. Also acts as a receptor for tyramine, but with much less potency. The activity of this receptor is mediated by G proteins which activate adenylyl cyclase. The sequence is that of Octopamine receptor beta-2R from Chilo suppressalis (Asiatic rice borer moth).